Reading from the N-terminus, the 450-residue chain is Ribulose bisphosphate carboxylase large chain (450 aa).

An N6,N6,N6-trimethyllysine modification is found at Lys4. Positions 113 and 163 each coordinate substrate. The active-site Proton acceptor is Lys165. Lys167 serves as a coordination point for substrate. Residues Lys191, Asp193, and Glu194 each contribute to the Mg(2+) site. The residue at position 191 (Lys191) is an N6-carboxylysine. The active-site Proton acceptor is the His284. Substrate is bound by residues Arg285, His317, and Ser369.

This sequence belongs to the RuBisCO large chain family. Type I subfamily. In terms of assembly, heterohexadecamer of 8 large chains and 8 small chains; disulfide-linked. The disulfide link is formed within the large subunit homodimers. The cofactor is Mg(2+). The disulfide bond which can form in the large chain dimeric partners within the hexadecamer appears to be associated with oxidative stress and protein turnover.

The protein resides in the plastid. The protein localises to the chloroplast. The catalysed reaction is 2 (2R)-3-phosphoglycerate + 2 H(+) = D-ribulose 1,5-bisphosphate + CO2 + H2O. It catalyses the reaction D-ribulose 1,5-bisphosphate + O2 = 2-phosphoglycolate + (2R)-3-phosphoglycerate + 2 H(+). In terms of biological role, ruBisCO catalyzes two reactions: the carboxylation of D-ribulose 1,5-bisphosphate, the primary event in carbon dioxide fixation, as well as the oxidative fragmentation of the pentose substrate in the photorespiration process. Both reactions occur simultaneously and in competition at the same active site. This is Ribulose bisphosphate carboxylase large chain from Sedum rubrotinctum (Jelly bean plant).